A 217-amino-acid polypeptide reads, in one-letter code: Cytochrome c biogenesis ATP-binding export protein CcmA (217 aa).

The 210-residue stretch at 6–215 (FSAKNLACVR…HLDQFAVAEE (210 aa)) folds into the ABC transporter domain. An ATP-binding site is contributed by 38–45 (GPNGSGKS).

Belongs to the ABC transporter superfamily. CcmA exporter (TC 3.A.1.107) family. As to quaternary structure, the complex is composed of two ATP-binding proteins (CcmA) and two transmembrane proteins (CcmB).

It is found in the cell inner membrane. The catalysed reaction is heme b(in) + ATP + H2O = heme b(out) + ADP + phosphate + H(+). Functionally, part of the ABC transporter complex CcmAB involved in the biogenesis of c-type cytochromes; once thought to export heme, this seems not to be the case, but its exact role is uncertain. Responsible for energy coupling to the transport system. The chain is Cytochrome c biogenesis ATP-binding export protein CcmA from Paramagnetospirillum magneticum (strain ATCC 700264 / AMB-1) (Magnetospirillum magneticum).